We begin with the raw amino-acid sequence, 95 residues long: Acylphosphatase (95 aa).

An Acylphosphatase-like domain is found at C7–Y95. Active-site residues include R22 and N40.

Belongs to the acylphosphatase family.

The enzyme catalyses an acyl phosphate + H2O = a carboxylate + phosphate + H(+). This chain is Acylphosphatase (acyP), found in Klebsiella pneumoniae subsp. pneumoniae (strain ATCC 700721 / MGH 78578).